Reading from the N-terminus, the 108-residue chain is Urease subunit beta (108 aa).

It belongs to the urease beta subunit family. As to quaternary structure, probable heterotrimer of UreA (gamma), UreB (beta) and UreC (alpha) subunits. Three heterotrimers associate to form the active enzyme. The trimeric urease interacts with an accessory complex composed of UreD, UreF and UreG, which is required for the assembly of the nickel containing metallocenter of UreC. The UreE protein may also play a direct role in nickel transfer to the urease apoprotein.

The protein localises to the cytoplasm. The catalysed reaction is urea + 2 H2O + H(+) = hydrogencarbonate + 2 NH4(+). It functions in the pathway nitrogen metabolism; urea degradation; CO(2) and NH(3) from urea (urease route): step 1/1. The chain is Urease subunit beta from Proteus mirabilis (strain HI4320).